The primary structure comprises 208 residues: 3-demethoxyubiquinol 3-hydroxylase (208 aa).

Fe cation contacts are provided by E57, E87, H90, E139, E171, and H174.

This sequence belongs to the COQ7 family. Requires Fe cation as cofactor.

It is found in the cell membrane. The enzyme catalyses a 5-methoxy-2-methyl-3-(all-trans-polyprenyl)benzene-1,4-diol + AH2 + O2 = a 3-demethylubiquinol + A + H2O. It participates in cofactor biosynthesis; ubiquinone biosynthesis. Its function is as follows. Catalyzes the hydroxylation of 2-nonaprenyl-3-methyl-6-methoxy-1,4-benzoquinol during ubiquinone biosynthesis. This Nitrosospira multiformis (strain ATCC 25196 / NCIMB 11849 / C 71) protein is 3-demethoxyubiquinol 3-hydroxylase.